The chain runs to 776 residues: Calcium-independent phospholipase A2-gamma (776 aa).

2 stretches are compositionally biased toward basic and acidic residues: residues 226 to 238 and 307 to 331; these read RQLQ…EESK and LKSD…ICKD. 2 disordered regions span residues 226–274 and 306–331; these read RQLQ…EALP and KLKS…ICKD. Residues 439–634 enclose the PNPLA domain; the sequence is LAIDGGGTRG…LLNNPSALAL (196 aa). A GXGXXG motif is present at residues 443-448; it reads GGGTRG. The helical transmembrane segment at 469–489 threads the bilayer; that stretch reads LFDYICGVSTGAILAFMLGLF. Positions 475–479 match the GXSXG motif; the sequence is GVSTG. Ser-477 serves as the catalytic Nucleophile. Residue Asp-621 is the Proton acceptor of the active site. The short motif at 621-623 is the DGA/G element; the sequence is DGG. Lys-730 carries the N6-succinyllysine modification.

It localises to the endoplasmic reticulum membrane. The protein resides in the microsome membrane. Its subcellular location is the mitochondrion membrane. It is found in the peroxisome membrane. The enzyme catalyses a 1,2-diacyl-sn-glycero-3-phosphocholine + H2O = a 1-acyl-sn-glycero-3-phosphocholine + a fatty acid + H(+). It carries out the reaction a 1,2-diacyl-sn-glycero-3-phosphocholine + H2O = a 2-acyl-sn-glycero-3-phosphocholine + a fatty acid + H(+). The catalysed reaction is a 1,2-diacyl-sn-glycero-3-phosphoethanolamine + H2O = a 1-acyl-sn-glycero-3-phosphoethanolamine + a fatty acid + H(+). It catalyses the reaction a 1-O-(1Z-alkenyl)-2-acyl-sn-glycero-3-phosphocholine + H2O = a 1-O-(1Z-alkenyl)-sn-glycero-3-phosphocholine + a fatty acid + H(+). The enzyme catalyses a 1-acyl-sn-glycero-3-phosphocholine + H2O = sn-glycerol 3-phosphocholine + a fatty acid + H(+). It carries out the reaction 1-acyl-2-(9Z,12Z)-octadecadienoyl-sn-glycero-3-phosphocholine + H2O = a 1-acyl-sn-glycero-3-phosphocholine + (9Z,12Z)-octadecadienoate + H(+). The catalysed reaction is 1-acyl-2-(5Z,8Z,11Z,14Z-eicosatetraenoyl)-sn-glycero-3-phosphocholine + H2O = a 1-acyl-sn-glycero-3-phosphocholine + (5Z,8Z,11Z,14Z)-eicosatetraenoate + H(+). It catalyses the reaction 1-hexadecanoyl-2-(5Z,8Z,11Z,14Z-eicosatetraenoyl)-sn-glycero-3-phosphocholine + H2O = 1-hexadecanoyl-sn-glycero-3-phosphocholine + (5Z,8Z,11Z,14Z)-eicosatetraenoate + H(+). The enzyme catalyses 1-octadecanoyl-2-(9Z-octadecenoyl)-sn-glycero-3-phosphocholine + H2O = 1-octadecanoyl-sn-glycero-3-phosphocholine + (9Z)-octadecenoate + H(+). It carries out the reaction 1-hexadecanoyl-2-(9Z-octadecenoyl)-sn-glycero-3-phosphocholine + H2O = 1-hexadecanoyl-sn-glycero-3-phosphocholine + (9Z)-octadecenoate + H(+). The catalysed reaction is 1-hexadecanoyl-2-(9Z,12Z-octadecadienoyl)-sn-glycero-3-phosphocholine + H2O = (9Z,12Z)-octadecadienoate + 1-hexadecanoyl-sn-glycero-3-phosphocholine + H(+). It catalyses the reaction 1-acyl-2-(9Z,12Z)-octadecadienoyl-sn-glycero-3-phosphoethanolamine + H2O = a 1-acyl-sn-glycero-3-phosphoethanolamine + (9Z,12Z)-octadecadienoate + H(+). The enzyme catalyses 1-acyl-2-(5Z,8Z,11Z,14Z)-eicosatetraenoyl-sn-glycero-3-phosphoethanolamine + H2O = a 1-acyl-sn-glycero-3-phosphoethanolamine + (5Z,8Z,11Z,14Z)-eicosatetraenoate + H(+). It carries out the reaction 1-hexadecanoyl-2-(5Z,8Z,11Z,14Z-eicosatetraenoyl)-sn-glycero-3-phosphoethanolamine + H2O = 1-hexadecanoyl-sn-glycero-3-phosphoethanolamine + (5Z,8Z,11Z,14Z)-eicosatetraenoate + H(+). The catalysed reaction is 1-hexadecanoyl-2-(5Z,8Z,11Z,14Z-eicosatetraenoyl)-sn-glycero-3-phosphocholine + H2O = 2-(5Z,8Z,11Z,14Z)-eicosatetraenoyl-sn-glycero-3-phosphocholine + hexadecanoate + H(+). It catalyses the reaction 1-octadecanoyl-2-(9Z-octadecenoyl)-sn-glycero-3-phosphocholine + H2O = 2-(9Z-octadecenoyl)-sn-glycero-3-phosphocholine + octadecanoate + H(+). The enzyme catalyses 1-hexadecanoyl-2-(4Z,7Z,10Z,13Z,16Z,19Z-docosahexaenoyl)-sn-glycero-3-phosphocholine + H2O = 2-(4Z,7Z,10Z,13Z,16Z,19Z-docosahexaenoyl)-sn-glycero-3-phosphocholine + hexadecanoate + H(+). It carries out the reaction 1-O-(1Z)-hexadecenyl-2 (5Z,8Z,11Z,14Z)-eicosatetraenoyl-sn-glycero-3-phosphocholine + H2O = 1-(1Z-hexadecenyl)-sn-glycero-3-phosphocholine + (5Z,8Z,11Z,14Z)-eicosatetraenoate + H(+). The catalysed reaction is 1-O-(1Z-hexadecenyl)-2-(9Z-octadecenoyl)-sn-glycero-3-phosphocholine + H2O = 1-(1Z-hexadecenyl)-sn-glycero-3-phosphocholine + (9Z)-octadecenoate + H(+). It catalyses the reaction 1-hexadecanoyl-sn-glycero-3-phosphocholine + H2O = sn-glycerol 3-phosphocholine + hexadecanoate + H(+). The enzyme catalyses 1',3'-bis-[1,2-di-(9Z,12Z-octadecadienoyl)-sn-glycero-3-phospho]-glycerol + H2O = 1'-[1,2-di-(9Z,12Z-octadecadienoyl)-sn-glycero-3-phospho]-3'-[1-(9Z,12Z-octadecadienoyl)-sn-glycero-3-phospho]-glycerol + (9Z,12Z)-octadecadienoate + H(+). It carries out the reaction 1'-[1-acyl-2-(9-hydroxy-(10E,12Z)-octadecadienoyl)-sn-glycero-3-phospho]-3'-[1,2-diacyl-sn-glycero-3-phospho]-glycerol + H2O = 9-hydroxy-(10E,12Z)-octadecadienoate + 1'-[1,2-diacyl-sn-glycero-3-phospho],3'-[1-acyl-sn-glycero-3-phospho]-glycerol + H(+). Its pathway is phospholipid metabolism. Calcium-independent phospholipase. In terms of biological role, calcium-independent and membrane-bound phospholipase, that catalyzes the esterolytic cleavage of fatty acids from glycerophospholipids to yield free fatty acids and lysophospholipids, hence regulating membrane physical properties and the release of lipid second messengers and growth factors. Hydrolyzes phosphatidylethanolamine, phosphatidylcholine and probably phosphatidylinositol with a possible preference for the former. Has also a broad substrate specificity in terms of fatty acid moieties, hydrolyzing saturated and mono-unsaturated fatty acids at nearly equal rates from either the sn-1 or sn-2 position in diacyl phosphatidylcholine. However, has a weak activity toward polyunsaturated fatty acids at the sn-2 position, and thereby favors the production of 2-arachidonoyl lysophosphatidylcholine, a key branch point metabolite in eicosanoid signaling. On the other hand, can produce arachidonic acid from the sn-1 position of diacyl phospholipid and from the sn-2 position of arachidonate-containing plasmalogen substrates. Therefore, plays an important role in the mobilization of arachidonic acid in response to cellular stimuli and the generation of lipid second messengers. Can also hydrolyze lysophosphatidylcholine. In the mitochondrial compartment, catalyzes the hydrolysis and release of oxidized aliphatic chains from cardiolipin and integrates mitochondrial bioenergetics and signaling. It is essential for maintaining efficient bioenergetic mitochondrial function through tailoring mitochondrial membrane lipid metabolism and composition. The protein is Calcium-independent phospholipase A2-gamma of Rattus norvegicus (Rat).